The chain runs to 453 residues: Asparagine--tRNA ligase (453 aa).

This sequence belongs to the class-II aminoacyl-tRNA synthetase family. As to quaternary structure, homodimer.

Its subcellular location is the cytoplasm. It carries out the reaction tRNA(Asn) + L-asparagine + ATP = L-asparaginyl-tRNA(Asn) + AMP + diphosphate + H(+). This is Asparagine--tRNA ligase from Malacoplasma penetrans (strain HF-2) (Mycoplasma penetrans).